Reading from the N-terminus, the 208-residue chain is Large ribosomal subunit protein bL17 (208 aa).

The disordered stretch occupies residues T122 to E208. The span at A151–E179 shows a compositional bias: low complexity.

This sequence belongs to the bacterial ribosomal protein bL17 family. In terms of assembly, part of the 50S ribosomal subunit. Contacts protein L32.

The polypeptide is Large ribosomal subunit protein bL17 (Desulfosudis oleivorans (strain DSM 6200 / JCM 39069 / Hxd3) (Desulfococcus oleovorans)).